We begin with the raw amino-acid sequence, 337 residues long: Glycerol-3-phosphate dehydrogenase [NAD(P)+] 2 (337 aa).

T11, W12, and K105 together coordinate NADPH. The sn-glycerol 3-phosphate site is built by K105, G139, and T141. A143 lines the NADPH pocket. Sn-glycerol 3-phosphate contacts are provided by K194, D247, S257, R258, and N259. K194 serves as the catalytic Proton acceptor. Residue R258 participates in NADPH binding. NADPH contacts are provided by V282 and E284.

It belongs to the NAD-dependent glycerol-3-phosphate dehydrogenase family.

It localises to the cytoplasm. It catalyses the reaction sn-glycerol 3-phosphate + NAD(+) = dihydroxyacetone phosphate + NADH + H(+). The enzyme catalyses sn-glycerol 3-phosphate + NADP(+) = dihydroxyacetone phosphate + NADPH + H(+). It functions in the pathway membrane lipid metabolism; glycerophospholipid metabolism. In terms of biological role, catalyzes the reduction of the glycolytic intermediate dihydroxyacetone phosphate (DHAP) to sn-glycerol 3-phosphate (G3P), the key precursor for phospholipid synthesis. The protein is Glycerol-3-phosphate dehydrogenase [NAD(P)+] 2 of Lactobacillus delbrueckii subsp. bulgaricus (strain ATCC 11842 / DSM 20081 / BCRC 10696 / JCM 1002 / NBRC 13953 / NCIMB 11778 / NCTC 12712 / WDCM 00102 / Lb 14).